The chain runs to 198 residues: Nucleoid occlusion factor SlmA (198 aa).

Residues 10-70 enclose the HTH tetR-type domain; that stretch reads NRREEILQSL…SLIEFIEDSL (61 aa). Residues 33 to 52 constitute a DNA-binding region (H-T-H motif); the sequence is TTAKLAASVGVSEAALYRHF. A coiled-coil region spans residues 117–144; that stretch reads EQDRLQGRINQLFERIEAQLRQVLREKR.

It belongs to the nucleoid occlusion factor SlmA family. Homodimer. Interacts with FtsZ.

It localises to the cytoplasm. The protein localises to the nucleoid. Functionally, required for nucleoid occlusion (NO) phenomenon, which prevents Z-ring formation and cell division over the nucleoid. Acts as a DNA-associated cell division inhibitor that binds simultaneously chromosomal DNA and FtsZ, and disrupts the assembly of FtsZ polymers. SlmA-DNA-binding sequences (SBS) are dispersed on non-Ter regions of the chromosome, preventing FtsZ polymerization at these regions. In Escherichia coli (strain 55989 / EAEC), this protein is Nucleoid occlusion factor SlmA.